We begin with the raw amino-acid sequence, 67 residues long: Sec-independent protein translocase protein TatA (67 aa).

Residues 1–21 (MGSFSLTHWIIVLIIVVLIFG) form a helical membrane-spanning segment. The interval 43 to 67 (LNEGTDGKEAQKDDVIEHKKDEDKA) is disordered. Residues 47 to 67 (TDGKEAQKDDVIEHKKDEDKA) show a composition bias toward basic and acidic residues.

Belongs to the TatA/E family. The Tat system comprises two distinct complexes: a TatABC complex, containing multiple copies of TatA, TatB and TatC subunits, and a separate TatA complex, containing only TatA subunits. Substrates initially bind to the TatABC complex, which probably triggers association of the separate TatA complex to form the active translocon.

The protein resides in the cell inner membrane. Part of the twin-arginine translocation (Tat) system that transports large folded proteins containing a characteristic twin-arginine motif in their signal peptide across membranes. TatA could form the protein-conducting channel of the Tat system. This is Sec-independent protein translocase protein TatA from Neisseria gonorrhoeae (strain ATCC 700825 / FA 1090).